The primary structure comprises 256 residues: Acidic leucine-rich nuclear phosphoprotein 32 family member E (256 aa).

LRR repeat units follow at residues 43 to 64 (ELEF…PTLS), 65 to 87 (KLRK…AERC), and 89 to 110 (NLTY…EALQ). In terms of domain architecture, LRRCT spans 123 to 161 (CEITNLEDYRDSIFDLLQQITYLDGFDQEDNEAPDSEDD). The disordered stretch occupies residues 147–256 (GFDQEDNEAP…PEDEGEEEDD (110 aa)). 2 stretches are compositionally biased toward acidic residues: residues 148–205 (FDQE…EEEV) and 215–235 (IQDE…EEEA). The ZID domain stretch occupies residues 204-256 (EVGLSYLMKEEIQDEDDDDDYVEEGGDEEEEAEGIRGEKRKRDPEDEGEEEDD). The segment covering 236 to 247 (EGIRGEKRKRDP) has biased composition (basic and acidic residues).

This sequence belongs to the ANP32 family. In terms of assembly, component of a SWR1-like complex. Interacts with H2A.Z/H2AZ1.

It localises to the cytoplasm. The protein localises to the nucleus. In terms of biological role, histone chaperone that specifically mediates the genome-wide removal of histone H2A.Z/H2AZ1 from the nucleosome: removes H2A.Z/H2AZ1 from its normal sites of deposition, especially from enhancer and insulator regions. Not involved in deposition of H2A.Z/H2AZ1 in the nucleosome. May stabilize the evicted H2A.Z/H2AZ1-H2B dimer, thus shifting the equilibrium towards dissociation and the off-chromatin state. Inhibits activity of protein phosphatase 2A (PP2A). Does not inhibit protein phosphatase 1. May play a role in cerebellar development and synaptogenesis. The polypeptide is Acidic leucine-rich nuclear phosphoprotein 32 family member E (ANP32E) (Gallus gallus (Chicken)).